We begin with the raw amino-acid sequence, 213 residues long: NADH dehydrogenase [ubiquinone] iron-sulfur protein 7, mitochondrial (213 aa).

The transit peptide at 1–31 (MALIARNAKLLTGTAPFLQRAATIHTTLPSL) directs the protein to the mitochondrion. Residues 30-42 (SLSQQPASSPATS) are compositionally biased toward low complexity. The tract at residues 30–52 (SLSQQPASSPATSGGAQPPSMNT) is disordered. [4Fe-4S] cluster is bound by residues Cys88, Cys89, Cys153, and Cys183.

This sequence belongs to the complex I 20 kDa subunit family. As to quaternary structure, complex I is composed of about 45 different subunits. This is a component of the iron-sulfur (IP) fragment of the enzyme. [4Fe-4S] cluster is required as a cofactor.

The protein localises to the mitochondrion. The enzyme catalyses a ubiquinone + NADH + 5 H(+)(in) = a ubiquinol + NAD(+) + 4 H(+)(out). Core subunit of the mitochondrial membrane respiratory chain NADH dehydrogenase (Complex I) that is believed to belong to the minimal assembly required for catalysis. Complex I functions in the transfer of electrons from NADH to the respiratory chain. The immediate electron acceptor for the enzyme is believed to be ubiquinone. The polypeptide is NADH dehydrogenase [ubiquinone] iron-sulfur protein 7, mitochondrial (Solanum tuberosum (Potato)).